Consider the following 228-residue polypeptide: Cytochrome c oxidase subunit 2 (228 aa).

Residues 1-14 (MAYPFQLGFQDATS) lie on the Mitochondrial intermembrane side of the membrane. A helical transmembrane segment spans residues 15–45 (PIMEELLHFHDHTLMIVFLISSLVLYIISLM). Topologically, residues 46–59 (LTTKLTHTSTMDAQ) are mitochondrial matrix. The chain crosses the membrane as a helical span at residues 60–87 (EVETIWTILPAIILILIALPSLRILYMM). Over 88 to 228 (DEINNPALTV…FEKWSTSMLT (141 aa)) the chain is Mitochondrial intermembrane. The Cu cation site is built by H161, C196, E198, C200, H204, and M207. Mg(2+) is bound at residue E198. Y218 carries the phosphotyrosine modification.

It belongs to the cytochrome c oxidase subunit 2 family. In terms of assembly, component of the cytochrome c oxidase (complex IV, CIV), a multisubunit enzyme composed of 14 subunits. The complex is composed of a catalytic core of 3 subunits MT-CO1, MT-CO2 and MT-CO3, encoded in the mitochondrial DNA, and 11 supernumerary subunits COX4I, COX5A, COX5B, COX6A, COX6B, COX6C, COX7A, COX7B, COX7C, COX8 and NDUFA4, which are encoded in the nuclear genome. The complex exists as a monomer or a dimer and forms supercomplexes (SCs) in the inner mitochondrial membrane with NADH-ubiquinone oxidoreductase (complex I, CI) and ubiquinol-cytochrome c oxidoreductase (cytochrome b-c1 complex, complex III, CIII), resulting in different assemblies (supercomplex SCI(1)III(2)IV(1) and megacomplex MCI(2)III(2)IV(2)). Found in a complex with TMEM177, COA6, COX18, COX20, SCO1 and SCO2. Interacts with TMEM177 in a COX20-dependent manner. Interacts with COX20. Interacts with COX16. Requires Cu cation as cofactor.

It localises to the mitochondrion inner membrane. It carries out the reaction 4 Fe(II)-[cytochrome c] + O2 + 8 H(+)(in) = 4 Fe(III)-[cytochrome c] + 2 H2O + 4 H(+)(out). Its function is as follows. Component of the cytochrome c oxidase, the last enzyme in the mitochondrial electron transport chain which drives oxidative phosphorylation. The respiratory chain contains 3 multisubunit complexes succinate dehydrogenase (complex II, CII), ubiquinol-cytochrome c oxidoreductase (cytochrome b-c1 complex, complex III, CIII) and cytochrome c oxidase (complex IV, CIV), that cooperate to transfer electrons derived from NADH and succinate to molecular oxygen, creating an electrochemical gradient over the inner membrane that drives transmembrane transport and the ATP synthase. Cytochrome c oxidase is the component of the respiratory chain that catalyzes the reduction of oxygen to water. Electrons originating from reduced cytochrome c in the intermembrane space (IMS) are transferred via the dinuclear copper A center (CU(A)) of subunit 2 and heme A of subunit 1 to the active site in subunit 1, a binuclear center (BNC) formed by heme A3 and copper B (CU(B)). The BNC reduces molecular oxygen to 2 water molecules using 4 electrons from cytochrome c in the IMS and 4 protons from the mitochondrial matrix. The protein is Cytochrome c oxidase subunit 2 (MT-CO2) of Sus scrofa (Pig).